A 161-amino-acid chain; its full sequence is Leucine-rich colipase-like protein 1 (161 aa).

The first 25 residues, 1 to 25 (MSVSVWPPLLLLLLLLLLWAVPTFQ), serve as a signal peptide directing secretion.

The protein is Leucine-rich colipase-like protein 1 (Lrcol1) of Mus musculus (Mouse).